Reading from the N-terminus, the 178-residue chain is Arginine repressor (178 aa).

The tract at residues 1-20 (MTEAQEPEYGGPSVPQTRTA) is disordered.

It belongs to the ArgR family.

Its subcellular location is the cytoplasm. It functions in the pathway amino-acid biosynthesis; L-arginine biosynthesis [regulation]. In terms of biological role, regulates arginine biosynthesis genes. The polypeptide is Arginine repressor (Streptomyces griseus subsp. griseus (strain JCM 4626 / CBS 651.72 / NBRC 13350 / KCC S-0626 / ISP 5235)).